We begin with the raw amino-acid sequence, 348 residues long: 3'-dehydrocarminate deglycosidase alpha subunit (348 aa).

Glu145 provides a ligand contact to Mg(2+). His147 acts as the Proton acceptor in catalysis. 3 residues coordinate Mg(2+): Asp177, His275, and Glu311.

It belongs to the C-glycoside deglycosidase alpha subunit family. Heterodimer composed of an alpha subunit (CarB) and a beta subunit (CarC). Requires Mg(2+) as cofactor.

The enzyme catalyses 3'-dehydrocarminate + H(+) = kermesate + 1,5-anhydro-D-erythro-hex-1-en-3-ulose. With respect to regulation, activity is strongly reduced in the presence of chelating agents. Carbon-carbon bond-cleaving enzyme which participates in a carminate degradation pathway. Cleaves the C-C bond in 3'-dehydrocarminate to form kermesate. Also shows weak activity with other C-glycosides, such as 3''-dehydropuerarin (3''-oxo-puerarin), 3''-dehydroisoorientin (3''-oxo-homoorientin) and 3'-dehydromangiferin (3'-oxo-mangiferin). This Microbacterium sp protein is 3'-dehydrocarminate deglycosidase alpha subunit.